The primary structure comprises 107 residues: Large ribosomal subunit protein uL24 (107 aa).

Belongs to the universal ribosomal protein uL24 family. As to quaternary structure, part of the 50S ribosomal subunit.

Its function is as follows. One of two assembly initiator proteins, it binds directly to the 5'-end of the 23S rRNA, where it nucleates assembly of the 50S subunit. In terms of biological role, one of the proteins that surrounds the polypeptide exit tunnel on the outside of the subunit. This Nitratidesulfovibrio vulgaris (strain ATCC 29579 / DSM 644 / CCUG 34227 / NCIMB 8303 / VKM B-1760 / Hildenborough) (Desulfovibrio vulgaris) protein is Large ribosomal subunit protein uL24.